A 448-amino-acid polypeptide reads, in one-letter code: Glutamyl-tRNA reductase (448 aa).

Substrate is bound by residues 48–51 (TCNR), S100, 105–107 (EDQ), and Q111. C49 functions as the Nucleophile in the catalytic mechanism. 180-185 (GAGEIG) contributes to the NADP(+) binding site.

This sequence belongs to the glutamyl-tRNA reductase family. As to quaternary structure, homodimer.

The enzyme catalyses (S)-4-amino-5-oxopentanoate + tRNA(Glu) + NADP(+) = L-glutamyl-tRNA(Glu) + NADPH + H(+). The protein operates within porphyrin-containing compound metabolism; protoporphyrin-IX biosynthesis; 5-aminolevulinate from L-glutamyl-tRNA(Glu): step 1/2. In terms of biological role, catalyzes the NADPH-dependent reduction of glutamyl-tRNA(Glu) to glutamate 1-semialdehyde (GSA). This is Glutamyl-tRNA reductase from Methanosarcina mazei (strain ATCC BAA-159 / DSM 3647 / Goe1 / Go1 / JCM 11833 / OCM 88) (Methanosarcina frisia).